Reading from the N-terminus, the 490-residue chain is Tegument protein VP16 (490 aa).

The segment at 12 to 35 (MNADGASPPPPRPAGGPKNTPAAP) is disordered. 4 positions are modified to phosphoserine: serine 18, serine 353, serine 411, and serine 452. Positions 411-490 (STAPPTDVSL…DALGIDEYGG (80 aa)) are transcriptional activation.

It belongs to the herpesviridae tegument protein VP16 protein family. In terms of assembly, interacts with tegument protein VP22. Interacts with gH (via C-terminus). Interacts with the virion host shutoff protein (vhs). Interacts with VP11/12. Associates with the VP16-induced complex; binding to host HCFC1 activates VP16 for association with the octamer motif-binding host protein POU2F1, to form a multiprotein-DNA complex responsible for activating transcription of the viral immediate early genes. Interacts with host P-TEFb; this interaction recruits P-TEFb to the viral alpha-gene promoters and overcomes transcriptional inhibition by ICP22 and promotes transcription of IE genes.

The protein resides in the virion tegument. It localises to the host nucleus. In terms of biological role, in the early stage of viral replication, acts as a transcriptional activator of immediate-early (IE) gene products (alpha-genes), which is released by invading virions. Recruits P-TEFb to the viral alpha-gene promoters and overcomes transcriptional inhibition by ICP22 to promote transcription of IE genes. VP16-induced complex represents a regulatory switch: when it is on, it promotes IE-gene expression and thus lytic infection, and when it is off, it limits IE-gene transcription favoring latent infection. Acts as a key activator of lytic infection by initiating the lytic program through the assembly of the transcriptional regulatory VP16-induced complex composed of VP16 and two cellular factors, HCFC1 and POU2F1. This complex recognizes the core motif 'TAATGARAT' in alpha-gene promoters. In the late stage of viral replication, VP16, as a tegument, is involved in viral assembly. Functionally, may play a role in the aggregation of tegument proteins around nucleocapsids during virus morphogenesis. The polypeptide is Tegument protein VP16 (Human herpesvirus 1 (strain 17) (HHV-1)).